The primary structure comprises 1432 residues: ABC transporter B family member 3 (1432 aa).

Disordered stretches follow at residues 1–21 (MDDG…EEEI) and 48–149 (ITQP…KTEE). Low complexity-rich tracts occupy residues 52-62 (SNNNNNSNNNN), 76-106 (NNNN…FNNN), and 118-135 (NTNE…NNND). Residues 117 to 163 (ENTNENNNKNNNNNNNNNDDYNDGADERVKTEEEIKKEAENELNQSV) adopt a coiled-coil conformation. Positions 180–479 (MFLGTIAAVI…ASPCLALFAQ (300 aa)) constitute an ABC transmembrane type-1 1 domain. Transmembrane regions (helical) follow at residues 185–205 (IAAV…GLVV), 232–252 (LLML…LWMI), 303–323 (KVGR…IGFT), 325–345 (GWQL…GGFF), 410–430 (GLGL…AFWY), and 457–477 (FFAV…LALF). The ABC transporter 1 domain occupies 514–750 (IEFKDVGFHY…QGLYFDLVEK (237 aa)). 549-556 (GDSGGGKS) serves as a coordination point for ATP. The tract at residues 787–819 (KRSLRKNESESNKKDKEDSNNKKKKKSNKKKVE) is disordered. Over residues 791–807 (RKNESESNKKDKEDSNN) the composition is skewed to basic and acidic residues. An ABC transmembrane type-1 2 domain is found at 837–1157 (WCFGFLSAVG…ASSFAPDLAK (321 aa)). The next 6 helical transmembrane spans lie at 838–858 (CFGF…AMVF), 882–902 (LMFV…GFLF), 968–988 (MVGG…VIIA), 989–1009 (CFPL…GFSS), 1060–1080 (ISGF…CLSF), and 1134–1154 (VFFA…FAPD). In terms of domain architecture, ABC transporter 2 spans 1192–1428 (IEFKNLHFSY…EGPYSQLWYN (237 aa)). Position 1227–1234 (1227–1234 (GDSGGGKS)) interacts with ATP.

Belongs to the ABC transporter superfamily. ABCB family. Multidrug resistance exporter (TC 3.A.1.201) subfamily.

It is found in the membrane. This Dictyostelium discoideum (Social amoeba) protein is ABC transporter B family member 3 (abcB3).